Reading from the N-terminus, the 374-residue chain is Alanine racemase (374 aa).

Residue K35 is the Proton acceptor; specific for D-alanine of the active site. Position 35 is an N6-(pyridoxal phosphate)lysine (K35). R133 contacts substrate. Y264 acts as the Proton acceptor; specific for L-alanine in catalysis. M312 is a binding site for substrate.

It belongs to the alanine racemase family. Pyridoxal 5'-phosphate serves as cofactor.

It catalyses the reaction L-alanine = D-alanine. It participates in amino-acid biosynthesis; D-alanine biosynthesis; D-alanine from L-alanine: step 1/1. In terms of biological role, catalyzes the interconversion of L-alanine and D-alanine. May also act on other amino acids. This is Alanine racemase (alr) from Thermobifida fusca (strain YX).